An 858-amino-acid chain; its full sequence is Ubiquitin carboxyl-terminal hydrolase 5 (858 aa).

At Ala-2 the chain carries N-acetylalanine. The disordered stretch occupies residues 74 to 96 (RRTRRPKEEDPTTGTGDPPRKKP). Residue Lys-113 forms a Glycyl lysine isopeptide (Lys-Gly) (interchain with G-Cter in SUMO) linkage. Phosphoserine is present on residues Ser-149 and Ser-156. The segment at 175-283 (QVSKHAFSLK…EHLSHFGIDM (109 aa)) adopts a UBP-type; degenerate zinc-finger fold. Residues Cys-195 and Cys-816 are joined by a disulfide bond. 2 residues coordinate Zn(2+): Cys-199 and Cys-202. Trp-209 is a binding site for substrate. Position 219 (Cys-219) interacts with Zn(2+). Residue 221 to 224 (RRYF) coordinates substrate. His-232 provides a ligand contact to Zn(2+). 3 residues coordinate substrate: Tyr-259, Tyr-261, and Asp-264. Thr-292 is modified (phosphothreonine). One can recognise a USP domain in the interval 326-856 (TGIRNLGNSC…LGYIYFYQRV (531 aa)). The active-site Nucleophile is the Cys-335. Position 623 is a phosphothreonine (Thr-623). UBA domains follow at residues 654–695 (MLDE…VMSH) and 722–762 (PPPE…IFSH). 3 positions are modified to phosphoserine: Ser-779, Ser-783, and Ser-785. Residue His-818 is the Proton acceptor of the active site.

It belongs to the peptidase C19 family. In terms of assembly, homodimer. Interacts with TRIML1. Ubiquitinated by SMURF1; leading to proteasomal degradation. In terms of processing, SUMOylated at Lys-113; SUMOylation affects the interaction with Cav3.2 channels.

It localises to the cytoplasm. It is found in the stress granule. The protein localises to the nucleus. The catalysed reaction is Thiol-dependent hydrolysis of ester, thioester, amide, peptide and isopeptide bonds formed by the C-terminal Gly of ubiquitin (a 76-residue protein attached to proteins as an intracellular targeting signal).. Functionally, deubiquitinating enzyme that participates in a wide range of cellular processes by specifically cleaving isopeptide bonds between ubiquitin and substrate proteins or ubiquitin itself. Affects thereby important cellular signaling pathways such as NF-kappa-B, Wnt/beta-catenin, and cytokine production by regulating ubiquitin-dependent protein degradation. Participates in the activation of the Wnt signaling pathway by promoting FOXM1 deubiquitination and stabilization that induces the recruitment of beta-catenin to Wnt target gene promoter. Regulates the assembly and disassembly of heat-induced stress granules by mediating the hydrolysis of unanchored ubiquitin chains. Promotes lipopolysaccharide-induced apoptosis and inflammatory response by stabilizing the TXNIP protein. Affects T-cell biology by stabilizing the inhibitory receptor on T-cells PDC1. Acts as a negative regulator of autophagy by regulating ULK1 at both protein and mRNA levels. Acts also as a negative regulator of type I interferon production by simultaneously removing both 'Lys-48'-linked unanchored and 'Lys-63'-linked anchored polyubiquitin chains on the transcription factor IRF3. Modulates the stability of DNA mismatch repair protein MLH1 and counteracts the effect of the ubiquitin ligase UBR4. Upon activation by insulin, it gets phosphorylated through mTORC1-mediated phosphorylation to enhance YTHDF1 stability by removing 'Lys-11'-linked polyubiquitination. May also deubiquitinate other substrates such as the calcium channel CACNA1H. In Pongo abelii (Sumatran orangutan), this protein is Ubiquitin carboxyl-terminal hydrolase 5 (UBP5).